A 73-amino-acid chain; its full sequence is Pelophylaxin-1 (73 aa).

Positions 1–22 (MFTMKKSLLLVFFLGTIALSLC) are cleaved as a signal peptide. Positions 23–41 (EEERGADDDNGGEITDEEI) are excised as a propeptide. A disulfide bridge links cysteine 67 with cysteine 73.

Expressed by the skin glands.

It is found in the secreted. Functionally, antimicrobial peptide. The protein is Pelophylaxin-1 of Pelophylax fukienensis (Fukien gold-striped pond frog).